A 351-amino-acid chain; its full sequence is Photosystem II D2 protein (351 aa).

A helical membrane pass occupies residues 39–59 (TSYLSIGGWFTGTTFVTSWYT). Position 116 (histidine 116) interacts with chlorophyll a. A helical membrane pass occupies residues 123–139 (GFCLRQFEIARLVGIRP). Pheophytin a contacts are provided by glutamine 128 and asparagine 141. The helical transmembrane segment at 151–164 (IFVSVFLMYPLGQA) threads the bilayer. Histidine 196 serves as a coordination point for chlorophyll a. A helical transmembrane segment spans residues 206-226 (AALLCAIHGATVQNTIFEDGD). Residues histidine 213 and phenylalanine 260 each coordinate a plastoquinone. Histidine 213 is a Fe cation binding site. Histidine 267 lines the Fe cation pocket. Residues 277–293 (GLWTSAIGIVGLALNLR) traverse the membrane as a helical segment.

It belongs to the reaction center PufL/M/PsbA/D family. PSII is composed of 1 copy each of membrane proteins PsbA, PsbB, PsbC, PsbD, PsbE, PsbF, PsbH, PsbI, PsbJ, PsbK, PsbL, PsbM, PsbT, PsbX, PsbY, PsbZ, Psb30/Ycf12, at least 3 peripheral proteins of the oxygen-evolving complex and a large number of cofactors. It forms dimeric complexes. The D1/D2 heterodimer binds P680, chlorophylls that are the primary electron donor of PSII, and subsequent electron acceptors. It shares a non-heme iron and each subunit binds pheophytin, quinone, additional chlorophylls, carotenoids and lipids. There is also a Cl(-1) ion associated with D1 and D2, which is required for oxygen evolution. The PSII complex binds additional chlorophylls, carotenoids and specific lipids. is required as a cofactor.

It localises to the plastid. The protein localises to the chloroplast thylakoid membrane. It catalyses the reaction 2 a plastoquinone + 4 hnu + 2 H2O = 2 a plastoquinol + O2. In terms of biological role, photosystem II (PSII) is a light-driven water:plastoquinone oxidoreductase that uses light energy to abstract electrons from H(2)O, generating O(2) and a proton gradient subsequently used for ATP formation. It consists of a core antenna complex that captures photons, and an electron transfer chain that converts photonic excitation into a charge separation. The D1/D2 (PsbA/PsbD) reaction center heterodimer binds P680, the primary electron donor of PSII as well as several subsequent electron acceptors. D2 is needed for assembly of a stable PSII complex. The polypeptide is Photosystem II D2 protein (Guillardia theta (Cryptophyte)).